The primary structure comprises 746 residues: MAGFKRGYDGKIAGLYDLDKTLGRGHFAVVKLARHVFTGEKVAVKVIDKTKLDTLATGHLFQEVRCMKLVQHPNIVRLYEVIDTQTKLYLILELGDGGDMFDYIMKHEEGLNEDLAKKYFAQIVHAISYCHKLHVVHRDLKPENVVFFEKQGLVKLTDFGFSNKFQPGKKLTTSCGSLAYSAPEILLGDEYDAPAVDIWSLGVILFMLVCGQPPFQEANDSETLTMIMDCKYTVPPRVSAGCRDLITRMLQRDPKRRASLEEIESHPWLQGVDPSPATKYNIPLVSYKNLSEEEHNSIIQRMVLGDIADRDAIVEALETNRYNHITATYFLLAERILREKQEKEIQTRSASPSNIKAQFRQSWPTKIDVPQDLEDDLTATPLSHATVPQSPARAGDSVLNGHRSKGLCDPAKKDELPELAGPALSTVPPASLKPAASGRKCLFRVEEDEEEDEEDKKPVSLSTQVVLRRKPSVTNRLTSRKSAPVLNQIFEEGESDDEFDMDENLPPKLSRLKMNIASPGTVHKRYHRRKSQGRGSSCSSSETSDDDSESRRRLDKDSGLAYSWHRRDSSEGPPGSEGDGGGQSKPSGGGGVDKASPGEQGTGGSGQGGSGGTPSGTAGSSRRCAGPDSSSSSPASAAPRGAELVQSLKLVSLCLGSQLHGAKYILDPQKALLSSVKVQERSTWKMCISAPGPGPSADLDPVRTKKLRNNVLQLPLCEKTISVNIQRSRKEGLLCASSPASCCHVI.

Residues 16–269 (YDLDKTLGRG…LEEIESHPWL (254 aa)) form the Protein kinase domain. ATP is bound by residues 22–30 (LGRGHFAVV) and Lys45. The Proton acceptor role is filled by Asp139. Position 162 is a phosphoserine (Ser162). Thr173 is subject to Phosphothreonine; by LKB1. Positions 291–334 (SEEEHNSIIQRMVLGDIADRDAIVEALETNRYNHITATYFLLAE) constitute a UBA domain. Phosphoserine occurs at positions 362, 390, 482, 495, and 518. The disordered stretch occupies residues 383–414 (SHATVPQSPARAGDSVLNGHRSKGLCDPAKKD). Acidic residues predominate over residues 494–503 (ESDDEFDMDE). The interval 494-638 (ESDDEFDMDE…SSSSSPASAA (145 aa)) is disordered. Residues 522-532 (VHKRYHRRKSQ) are compositionally biased toward basic residues. Residues 533–542 (GRGSSCSSSE) show a composition bias toward low complexity. Omega-N-methylarginine is present on Arg534. Basic and acidic residues predominate over residues 549–558 (ESRRRLDKDS). Gly residues-rich tracts occupy residues 575–592 (GSEG…GGGV) and 600–614 (QGTG…GGTP). The segment covering 615-638 (SGTAGSSRRCAGPDSSSSSPASAA) has biased composition (low complexity).

The protein belongs to the protein kinase superfamily. CAMK Ser/Thr protein kinase family. Mg(2+) serves as cofactor. Post-translationally, autophosphorylated. Phosphorylation on Thr-173 by STK11/LKB1 in complex with STE20-related adapter-alpha (STRADA) pseudo kinase and CAB39. As to expression, ubiquitously expressed in all tissues examined with highest levels in the brain and testis. Strongly expressed in the pyramidal and granule neurons of the hippocampus and also in the cerebellum.

It is found in the nucleus. The enzyme catalyses L-seryl-[protein] + ATP = O-phospho-L-seryl-[protein] + ADP + H(+). It catalyses the reaction L-threonyl-[protein] + ATP = O-phospho-L-threonyl-[protein] + ADP + H(+). With respect to regulation, activated by phosphorylation on Thr-173. Functionally, may play a role in hematopoietic cell proliferation or differentiation. Potential mediator of neuronal apoptosis. The chain is SNF-related serine/threonine-protein kinase from Rattus norvegicus (Rat).